Here is a 122-residue protein sequence, read N- to C-terminus: UPF0102 protein BQ09720 (122 aa).

This sequence belongs to the UPF0102 family.

In Bartonella quintana (strain Toulouse) (Rochalimaea quintana), this protein is UPF0102 protein BQ09720.